The following is a 379-amino-acid chain: Fimbrium subunit Fim1C (379 aa).

The first 17 residues, 1-17 (MEVKSLLMVMATLTIAG), serve as a signal peptide directing secretion. A lipid anchor (N-palmitoyl cysteine) is attached at Cys18. Cys18 carries the S-diacylglycerol cysteine lipid modification. Residues 18–45 (CSQNEMTEMNPDTNRTIGLDVYTEVQTR) constitute a propeptide that is removed on maturation.

This sequence belongs to the bacteroidetes fimbrillin superfamily. Mfa-like family. As to quaternary structure, may be part of the fimbrial tip.

The protein localises to the fimbrium. Its subcellular location is the cell outer membrane. Functionally, probably a component of the fimbrium tip. Fimbriae are filamentous appendages on the cell surface that mediate cell adhesion and biofilm formation. The polypeptide is Fimbrium subunit Fim1C (fim1C) (Phocaeicola vulgatus (strain ATCC 8482 / DSM 1447 / JCM 5826 / CCUG 4940 / NBRC 14291 / NCTC 11154) (Bacteroides vulgatus)).